The sequence spans 413 residues: Transmembrane protein 184A (413 aa).

Helical transmembrane passes span 47–69, 93–113, 130–150, 187–207, 223–243, 258–278, and 300–320; these read WLFL…ALVL, LLLI…LLGD, FVIY…GAIM, LQFC…QAFG, VTLI…LFYF, FLTI…LAIL, and LAAG…SVAL. The segment at 372–413 is disordered; the sequence is QHYTQQATHEAPRPGTHPSGGSGGSRKSRSLEKRMLIPSEDL.

It belongs to the TMEM184 family. Expressed in vascular cells (at protein level).

It localises to the cell membrane. Its subcellular location is the cytoplasm. The protein resides in the perinuclear region. The protein localises to the cytoplasmic vesicle membrane. It is found in the early endosome membrane. It localises to the endosome. Its subcellular location is the cytoplasmic vesicle. The protein resides in the secretory vesicle membrane. In terms of biological role, acts as a heparin receptor in vascular cells. May be involved in vesicle transport in exocrine cells and Sertoli cells. This is Transmembrane protein 184A (TMEM184A) from Homo sapiens (Human).